Consider the following 185-residue polypeptide: MPDRAADGRDGPPGGSAAPEDLYARARAICLRLLTRAPRTRAQLTDALRRREIPDEVIEAVLDRFGEVGIVDDAVFAEAWVDSRHAGRGLARRALAAELRQRGVDEDTVRAAVDGLSPAQEEATARQLVRRRLAATRGKPTEVRVRRLMGMLARRGYSAGLAYRLVREELEAEGVEVDFPSPEEG.

This sequence belongs to the RecX family.

The protein localises to the cytoplasm. In terms of biological role, modulates RecA activity. This chain is Regulatory protein RecX, found in Thermobifida fusca (strain YX).